Here is a 1041-residue protein sequence, read N- to C-terminus: FHIP family protein GF15501 (1041 aa).

2 disordered regions span residues 797-856 and 907-987; these read RKGN…NKRR and SNSS…SEPV. Ser803 carries the phosphoserine modification. The span at 808–824 shows a compositional bias: low complexity; it reads NLQQQQALNPAQQQGQQ. 2 stretches are compositionally biased toward polar residues: residues 825–843 and 907–933; these read RSAY…TPTS and SNSS…LSTQ. Low complexity predominate over residues 942 to 973; sequence SGSSSNSSMGGSSQTLSAHSNATTTHSSSTLH.

Belongs to the FHIP family.

This is FHIP family protein GF15501 from Drosophila ananassae (Fruit fly).